Here is a 173-residue protein sequence, read N- to C-terminus: uncharacterized protein (173 aa).

2 disordered regions span residues Met1–Ala23 and Thr48–Arg173. Positions Gly49–Pro60 are enriched in low complexity. Residues Pro70 to Leu83 show a composition bias toward pro residues. Residues Pro123–Ala136 show a composition bias toward low complexity.

This is an uncharacterized protein from Homo sapiens (Human).